Consider the following 273-residue polypeptide: NH(3)-dependent NAD(+) synthetase (273 aa).

46–53 (GISGGQDS) lines the ATP pocket. Position 52 (Asp-52) interacts with Mg(2+). Arg-139 is a deamido-NAD(+) binding site. Residue Thr-159 coordinates ATP. Glu-164 contacts Mg(2+). Deamido-NAD(+) contacts are provided by Lys-172 and Asp-179. Residues Lys-188 and Thr-210 each coordinate ATP. 259–260 (HK) is a deamido-NAD(+) binding site.

It belongs to the NAD synthetase family. Homodimer.

It catalyses the reaction deamido-NAD(+) + NH4(+) + ATP = AMP + diphosphate + NAD(+) + H(+). The protein operates within cofactor biosynthesis; NAD(+) biosynthesis; NAD(+) from deamido-NAD(+) (ammonia route): step 1/1. Catalyzes the ATP-dependent amidation of deamido-NAD to form NAD. Uses ammonia as a nitrogen source. The protein is NH(3)-dependent NAD(+) synthetase of Mycobacteroides abscessus (strain ATCC 19977 / DSM 44196 / CCUG 20993 / CIP 104536 / JCM 13569 / NCTC 13031 / TMC 1543 / L948) (Mycobacterium abscessus).